The following is a 765-amino-acid chain: MAKPRRNNKNKKGQSRSQAREKEEAELLKLQERIDQYDPAVDEKSISQFSDLPITQETLRGLNESSFMSLTDIQKKTIPIALKGEDLMGTARTGSGKTLAFLIPVVESLIRNKITEHDGLAALIVSPTRELAVQTFEVLTKIGKYNTFSAGLVTGGKDVQYEKERVSRMNILVGTPGRISQHLNEAVGMETSNLQVLVLDEADRCLDMGFKKQIDNIVGHLPPTRQTLLFSATVSDSVKDLARLSLTNPKRIGVSSDQDVSATPESLDQYYIRIPLDEKLDVLWSFIKSHLKSKILVFFSSSKQVQYAYETFRTLQPGISLLKLYGRHKQTSRLETTVKFTQAQYACLFATDIVARGLDFPAIDWVVQVDCPEDAVTYVHRVGRAARFGRQGKSLLMLLPSEEEGMLKRLENNKIEPKFMNIKQKSKKSIRPQLQSLCFKDPMIKNLGQRAFISYYKSVYIQKDKDVFKVEELPSEKYAASLGLPGAPKIKIKGGSSSKEKKNASRQLVALSKTNEDGESVENEASKVRTKYDRMFERKNQNVLSEHYLKLNGSQTKEDEDEEEEDDFMSVKRKDHELTEVELPDLTIPVSKRQAKKALSKKLSISTKGNPTKLKFDDEGVAHAIYELEDEEDFIKRGDAKEQKKAFVSRETEVMNEADEEDKIMAKEKRQEKKRKRKEVEKRMRDEELQSGDDEETVYTLGGDVDLERDMEYSTDEEEQPQNKKPKWFENDKHNRKNPVNHIVEIDEPETLEDLESLTARLLQH.

A compositionally biased stretch (basic residues) spans 1 to 14 (MAKPRRNNKNKKGQ). The tract at residues 1 to 24 (MAKPRRNNKNKKGQSRSQAREKEE) is disordered. Positions 47 to 75 (SQFSDLPITQETLRGLNESSFMSLTDIQK) match the Q motif motif. The region spanning 78–252 (IPIALKGEDL…RLSLTNPKRI (175 aa)) is the Helicase ATP-binding domain. 91-98 (ARTGSGKT) lines the ATP pocket. Positions 200–203 (DEAD) match the DEAD box motif. A Helicase C-terminal domain is found at 266–438 (SLDQYYIRIP…SIRPQLQSLC (173 aa)). Disordered regions lie at residues 493 to 526 (KGGS…NEAS), 552 to 576 (NGSQ…RKDH), and 641 to 735 (KEQK…DKHN). Over residues 558-568 (EDEDEEEEDDF) the composition is skewed to acidic residues. Composition is skewed to basic and acidic residues over residues 641–653 (KEQK…RETE) and 678–688 (KEVEKRMRDEE).

Belongs to the DEAD box helicase family. DDX10/DBP4 subfamily. Interacts with the U3 and U14 snoRNAs. Associates with pre-ribosomal complexes.

It localises to the nucleus. The protein resides in the nucleolus. It catalyses the reaction ATP + H2O = ADP + phosphate + H(+). ATP-dependent RNA helicase required for ribosome biogenesis. Involved in the release of U14 snoRNA in pre-ribosomal complexes. Required for pre-rRNA cleavage at site A2. The polypeptide is ATP-dependent RNA helicase DBP4 (DBP4) (Scheffersomyces stipitis (strain ATCC 58785 / CBS 6054 / NBRC 10063 / NRRL Y-11545) (Yeast)).